The sequence spans 679 residues: MSKNLLIELGLEELPAYVVTPSEKQLGERLATFLTENRLSFEDIQTFSTPRRLAVRVSGLADQQTDLTEDFKGPAKKIALDADGNFSKAAQGFVRGKGLTTDAIEFREVKGEEYVYVTKHEAGKPAKEVLLGVTEVLSAMTFPVSMHWANNSFEYIRPVHTLTVLLNDEALELDFLDIHSGRVSRGHRFLGTETTITSADSYEADLRSQFVIADAKERQEMIVEQIKAIEAAQGVQVDIDADLLNEVLNLVEFPTAFMGSFDAKYLDVPEEVLVTSMKNHQRYFVVRDQEGHLMPNFVSVRNGNDQAIENVIKGNEKVLVARLEDGEFFWREDQKLQIADLVAKLTNVTFHEKIGSLAEHMDRTRVIAASLAKEANLSAEEVTAVDRAAQIYKFDLLTGMVGEFDELQGIMGEKYARLAGEDAAVATAIREHYLPDAAGGALPETKVGAVLALADKLDTLLSFFSVGLIPSGSNDPYALRRATQGIVRILDHFGWRIPMDKLVDSLYDLSFDSLTYANKADVMNFIRARVDKMMGKAVPKDIREAVLESSTFVVPEMLAAAEALVKASHTENYKPAVESLSRAFNLAEKADASVQVDPSLFENEQENTLFAAIQGLTLAGSAAQQLEQVFALSPVINDFFDNTMVMAEDQALKNNRLAILSDLVSKAKAIAAFNQLNTK.

The protein belongs to the class-II aminoacyl-tRNA synthetase family. In terms of assembly, tetramer of two alpha and two beta subunits.

The protein localises to the cytoplasm. It catalyses the reaction tRNA(Gly) + glycine + ATP = glycyl-tRNA(Gly) + AMP + diphosphate. This is Glycine--tRNA ligase beta subunit from Streptococcus pyogenes serotype M4 (strain MGAS10750).